Here is a 356-residue protein sequence, read N- to C-terminus: Tyrosine recombinase XerS (356 aa).

The 106-residue stretch at 16–121 folds into the Core-binding (CB) domain; it reads IMPWYVLDYY…ALSSLYKYLT (106 aa). One can recognise a Tyr recombinase domain in the interval 169–354; it reads AFLDYVDKEY…VNDEQKNALD (186 aa). Catalysis depends on residues Arg210, Lys234, His306, Arg309, and His332. Tyr341 (O-(3'-phospho-DNA)-tyrosine intermediate) is an active-site residue.

The protein belongs to the 'phage' integrase family. XerS subfamily.

It localises to the cytoplasm. FtsK is required for recombination. In terms of biological role, site-specific tyrosine recombinase, which acts by catalyzing the cutting and rejoining of the recombining DNA molecules. Essential to convert dimers of the bacterial chromosome into monomers to permit their segregation at cell division. This is Tyrosine recombinase XerS from Streptococcus pyogenes serotype M18 (strain MGAS8232).